Consider the following 1755-residue polypeptide: Transposon Ty1-GR2 Gag-Pol polyprotein (1755 aa).

The span at 1–16 (MESQQLSQHSHISHGS) shows a compositional bias: low complexity. Disordered regions lie at residues 1–93 (MESQ…MMTQ), 126–173 (PQSQ…RPPP), and 352–421 (GSRN…SKST). Polar residues-rich tracts occupy residues 48–60 (TKANSQQTTTPAS) and 127–152 (QSQFPQYPSSVGTPLSTPSPESGNTF). The span at 153 to 165 (TDSSSADSDMTST) shows a compositional bias: low complexity. An RNA-binding region spans residues 299-401 (NNGIHINNKV…NSKSKTARAH (103 aa)). The span at 402–418 (NVSTSNNSPSTDNDSIS) shows a compositional bias: low complexity. At serine 416 the chain carries Phosphoserine. Aspartate 461 (for protease activity; shared with dimeric partner) is an active-site residue. The interval 583 to 640 (NVHTSESTRKYPYPFIHRMLAHANAQTIRYSLKNNTITYFNESDVDWSSAIDYQCPDC) is integrase-type zinc finger-like. An Integrase catalytic domain is found at 660–835 (NSYEPFQYLH…AGLDISTLLP (176 aa)). Mg(2+) contacts are provided by aspartate 671 and aspartate 736. 3 disordered regions span residues 956-1087 (SKAV…ETEK), 1092-1111 (RSPSIDASPPENNSSHNIVP), and 1130-1187 (DLPL…DNET). The segment covering 960-969 (SPTDSTPPST) has biased composition (low complexity). The span at 1005–1015 (STPQISNIEST) shows a compositional bias: polar residues. A compositionally biased stretch (basic and acidic residues) spans 1038–1053 (ESSHASKSKDFRHSDS). Composition is skewed to polar residues over residues 1054-1082 (YSENETNHTNVPISSTGGTNNKTVPQISD) and 1101-1111 (PENNSSHNIVP). Residues 1178-1212 (KKRSLEDNETEIKVSRDTWNTKNMRSLEPPRSKKR) carry the Bipartite nuclear localization signal motif. The 139-residue stretch at 1338 to 1476 (NNYYITQLDI…DILGLEIKYQ (139 aa)) folds into the Reverse transcriptase Ty1/copia-type domain. Residues aspartate 1346, aspartate 1427, aspartate 1428, aspartate 1610, glutamate 1652, and aspartate 1685 each contribute to the Mg(2+) site. An RNase H Ty1/copia-type domain is found at 1610–1752 (DASYGNQPYY…IKTFKLLTNK (143 aa)).

As to quaternary structure, the capsid protein forms a homotrimer, from which the VLPs are assembled. The protease is a homodimer, whose active site consists of two apposed aspartic acid residues. Initially, virus-like particles (VLPs) are composed of the structural unprocessed proteins Gag and Gag-Pol, and also contain the host initiator methionine tRNA (tRNA(i)-Met) which serves as a primer for minus-strand DNA synthesis, and a dimer of genomic Ty RNA. Processing of the polyproteins occurs within the particle and proceeds by an ordered pathway, called maturation. First, the protease (PR) is released by autocatalytic cleavage of the Gag-Pol polyprotein yielding capsid protein p45 and a Pol-p154 precursor protein. This cleavage is a prerequisite for subsequent processing of Pol-p154 at the remaining sites to release the mature structural and catalytic proteins. Maturation takes place prior to the RT reaction and is required to produce transposition-competent VLPs.

Its subcellular location is the cytoplasm. The protein resides in the nucleus. It carries out the reaction DNA(n) + a 2'-deoxyribonucleoside 5'-triphosphate = DNA(n+1) + diphosphate. The catalysed reaction is Endonucleolytic cleavage to 5'-phosphomonoester.. Functionally, capsid protein (CA) is the structural component of the virus-like particle (VLP), forming the shell that encapsulates the retrotransposons dimeric RNA genome. The particles are assembled from trimer-clustered units and there are holes in the capsid shells that allow for the diffusion of macromolecules. CA also has nucleocapsid-like chaperone activity, promoting primer tRNA(i)-Met annealing to the multipartite primer-binding site (PBS), dimerization of Ty1 RNA and initiation of reverse transcription. In terms of biological role, the aspartyl protease (PR) mediates the proteolytic cleavages of the Gag and Gag-Pol polyproteins after assembly of the VLP. Reverse transcriptase/ribonuclease H (RT) is a multifunctional enzyme that catalyzes the conversion of the retro-elements RNA genome into dsDNA within the VLP. The enzyme displays a DNA polymerase activity that can copy either DNA or RNA templates, and a ribonuclease H (RNase H) activity that cleaves the RNA strand of RNA-DNA heteroduplexes during plus-strand synthesis and hydrolyzes RNA primers. The conversion leads to a linear dsDNA copy of the retrotransposon that includes long terminal repeats (LTRs) at both ends. Its function is as follows. Integrase (IN) targets the VLP to the nucleus, where a subparticle preintegration complex (PIC) containing at least integrase and the newly synthesized dsDNA copy of the retrotransposon must transit the nuclear membrane. Once in the nucleus, integrase performs the integration of the dsDNA into the host genome. In Saccharomyces cerevisiae (strain ATCC 204508 / S288c) (Baker's yeast), this protein is Transposon Ty1-GR2 Gag-Pol polyprotein (TY1B-GR2).